An 816-amino-acid chain; its full sequence is Metabotropic glutamate receptor-like protein E (816 aa).

The first 27 residues, 1–27, serve as a signal peptide directing secretion; the sequence is MKIKIGNILKNVVILVIFSLFISKINS. At 28–436 the chain is on the extracellular side; sequence EVVKPNPAKP…QVVVFDRTLN (409 aa). N-linked (GlcNAc...) asparagine glycans are attached at residues Asn68, Asn311, and Asn388. A helical membrane pass occupies residues 437 to 457; the sequence is IVLGVITGVCVLIVIGIGSVI. Residues 458–469 lie on the Cytoplasmic side of the membrane; it reads ALQWRKFRYSSP. Residues 470–490 form a helical membrane-spanning segment; it reads LFCMFIIIGALMGLASVFTLL. Residues 491-496 lie on the Extracellular side of the membrane; the sequence is PTPTTP. A helical transmembrane segment spans residues 497-517; sequence LCSGFPWLLGLGYVIVFGTLF. The Cytoplasmic portion of the chain corresponds to 518-541; sequence TKTWRTWRLFSNARKFKIIRITNK. A helical membrane pass occupies residues 542–562; that stretch reads FIITLVGGFVLLESIFMIIWT. Topologically, residues 563–590 are extracellular; it reads AVDRPIPLAEPIFKAGEAQLQCTSDSEA. The chain crosses the membrane as a helical span at residues 591 to 611; it reads WWYVFVFYKVFYILFGVFLAF. At 612 to 625 the chain is on the cytoplasmic side; the sequence is KTRNVVDSLNESKP. Residues 626–646 form a helical membrane-spanning segment; sequence ITLALYNLTFVMVVAIALGFI. Residues 647-653 lie on the Extracellular side of the membrane; the sequence is LRDNPIA. Residues 654–674 form a helical membrane-spanning segment; that stretch reads IIVIQTIAILLGFTVTVSVLF. At 675–816 the chain is on the cytoplasmic side; the sequence is LPKVWMILSG…KKKKKKNNNK (142 aa). The segment at 697-718 is disordered; it reads DSMGRSNGNTTEAESTRGYTNK.

The protein belongs to the G-protein coupled receptor 3 family.

Its subcellular location is the membrane. In terms of biological role, may be involved in early development in cAMP sensing and subsequent chemotactic response. Probable receptor of GABA and glutamate, leading respectively to the induction or inhibition of SDF-2 formation. This is Metabotropic glutamate receptor-like protein E (grlE) from Dictyostelium discoideum (Social amoeba).